Consider the following 156-residue polypeptide: Small ribosomal subunit protein uS7 (156 aa).

This sequence belongs to the universal ribosomal protein uS7 family. In terms of assembly, part of the 30S ribosomal subunit. Contacts proteins S9 and S11.

Its function is as follows. One of the primary rRNA binding proteins, it binds directly to 16S rRNA where it nucleates assembly of the head domain of the 30S subunit. Is located at the subunit interface close to the decoding center, probably blocks exit of the E-site tRNA. The sequence is that of Small ribosomal subunit protein uS7 (rpsG) from Geobacillus stearothermophilus (Bacillus stearothermophilus).